The sequence spans 308 residues: D-alanine--D-alanine ligase (308 aa).

The 201-residue stretch at 102–302 (KKVAAAAGVA…FGELLSWMVE (201 aa)) folds into the ATP-grasp domain. Position 128 to 183 (128 to 183 (PMEPPYVVKPVREGSSFGVVIVKEDQTHPPQIISSAEWNYGAEVLVEKYIPGRELT)) interacts with ATP. Mg(2+)-binding residues include aspartate 252, glutamate 269, and asparagine 271.

Belongs to the D-alanine--D-alanine ligase family. Mg(2+) is required as a cofactor. It depends on Mn(2+) as a cofactor.

The protein localises to the cytoplasm. The catalysed reaction is 2 D-alanine + ATP = D-alanyl-D-alanine + ADP + phosphate + H(+). It participates in cell wall biogenesis; peptidoglycan biosynthesis. Its function is as follows. Cell wall formation. The protein is D-alanine--D-alanine ligase of Brucella anthropi (strain ATCC 49188 / DSM 6882 / CCUG 24695 / JCM 21032 / LMG 3331 / NBRC 15819 / NCTC 12168 / Alc 37) (Ochrobactrum anthropi).